The primary structure comprises 373 residues: 3',5'-bisphosphate nucleotidase AHL (373 aa).

The Proton acceptor role is filled by D52. Mg(2+) contacts are provided by E77, D144, V146, and D147. T149 serves as the catalytic Proton acceptor. Residues T149, S281, K284, K298, and D310 each coordinate adenosine 3',5'-bisphosphate. Residues S281, K284, K298, and D310 each contribute to the AMP site. D310 provides a ligand contact to Mg(2+).

This sequence belongs to the inositol monophosphatase superfamily. The cofactor is Mg(2+). As to expression, expressed in roots, leaves, stems, flowers and siliques.

It catalyses the reaction adenosine 3',5'-bisphosphate + H2O = AMP + phosphate. The catalysed reaction is 3'-phosphoadenylyl sulfate + H2O = adenosine 5'-phosphosulfate + phosphate. With respect to regulation, inhibited by Li(+) (IC(50)=10 mM), Na(+) (IC(50)=50 mM) and Ca(2+) (IC(50)=0.06 mM). Phosphatase that converts adenosine 3'-phosphate 5'-phosphosulfate (PAPS) to adenosine 5'-phosphosulfate (APS) and 3'-phosphoadenosine 5'-phosphate (3'-PAP) to AMP. May regulate the flux of sulfur in the sulfur-activation pathway by converting PAPS to APS. Prevents both the toxicity of PAP on RNA processing enzymes as well as the product inhibition by PAP of sulfate conjugation. The chain is 3',5'-bisphosphate nucleotidase AHL from Arabidopsis thaliana (Mouse-ear cress).